Consider the following 78-residue polypeptide: Large ribosomal subunit protein eL20 (78 aa).

This sequence belongs to the eukaryotic ribosomal protein eL20 family. Part of the 50S ribosomal subunit. Binds 23S rRNA.

The polypeptide is Large ribosomal subunit protein eL20 (Pyrobaculum arsenaticum (strain DSM 13514 / JCM 11321 / PZ6)).